The sequence spans 417 residues: Protein translocase subunit SecD (417 aa).

The next 6 helical transmembrane spans lie at 9–29 (LLVSVLAIVIAFAVFIKPLVS), 236–256 (ASMKAFAIGLAGVFLFMLLYY), 258–278 (LSGLVADIVLLLYTLLLLAVM), 288–308 (PGMAGIILSIGMAVDANVLIF), 333–353 (FTTILDSNVTTLMAAAVLFYL), and 360–380 (GFAVTLALGVLISMFTAVTVT).

This sequence belongs to the SecD/SecF family. SecD subfamily. Forms a complex with SecF. Part of the essential Sec protein translocation apparatus which comprises SecA, SecYEG and auxiliary proteins SecDF. Other proteins may also be involved.

Its subcellular location is the cell membrane. Functionally, part of the Sec protein translocase complex. Interacts with the SecYEG preprotein conducting channel. SecDF uses the proton motive force (PMF) to complete protein translocation after the ATP-dependent function of SecA. This chain is Protein translocase subunit SecD, found in Acidaminococcus fermentans (strain ATCC 25085 / DSM 20731 / CCUG 9996 / CIP 106432 / VR4).